The sequence spans 336 residues: NADH-quinone oxidoreductase subunit H (336 aa).

8 consecutive transmembrane segments (helical) span residues 4 to 24, 75 to 95, 108 to 128, 154 to 174, 181 to 201, 233 to 253, 272 to 292, and 308 to 328; these read YILW…LVVA, YLFF…WAVI, LGLL…VIAG, MGFA…TGII, IWHW…IAGI, LFFL…SIMF, FVPG…MFLW, and LGWK…ACMV.

The protein belongs to the complex I subunit 1 family. NDH-1 is composed of 14 different subunits. Subunits NuoA, H, J, K, L, M, N constitute the membrane sector of the complex.

It localises to the cell inner membrane. It catalyses the reaction a quinone + NADH + 5 H(+)(in) = a quinol + NAD(+) + 4 H(+)(out). Its function is as follows. NDH-1 shuttles electrons from NADH, via FMN and iron-sulfur (Fe-S) centers, to quinones in the respiratory chain. The immediate electron acceptor for the enzyme in this species is believed to be ubiquinone. Couples the redox reaction to proton translocation (for every two electrons transferred, four hydrogen ions are translocated across the cytoplasmic membrane), and thus conserves the redox energy in a proton gradient. This subunit may bind ubiquinone. The sequence is that of NADH-quinone oxidoreductase subunit H from Francisella tularensis subsp. tularensis (strain FSC 198).